A 189-amino-acid chain; its full sequence is Elongation factor P (189 aa).

Lys35 carries the post-translational modification N6-(3,6-diaminohexanoyl)-5-hydroxylysine.

The protein belongs to the elongation factor P family. Post-translationally, may be beta-lysylated on the epsilon-amino group of Lys-35 by the combined action of EpmA and EpmB, and then hydroxylated on the C5 position of the same residue by EpmC (if this protein is present). Lysylation is critical for the stimulatory effect of EF-P on peptide-bond formation. The lysylation moiety may extend toward the peptidyltransferase center and stabilize the terminal 3-CCA end of the tRNA. Hydroxylation of the C5 position on Lys-35 may allow additional potential stabilizing hydrogen-bond interactions with the P-tRNA.

It localises to the cytoplasm. It functions in the pathway protein biosynthesis; polypeptide chain elongation. Involved in peptide bond synthesis. Alleviates ribosome stalling that occurs when 3 or more consecutive Pro residues or the sequence PPG is present in a protein, possibly by augmenting the peptidyl transferase activity of the ribosome. Modification of Lys-35 is required for alleviation. The polypeptide is Elongation factor P (Wigglesworthia glossinidia brevipalpis).